A 156-amino-acid chain; its full sequence is Small ribosomal subunit protein uS7 (156 aa).

The protein belongs to the universal ribosomal protein uS7 family. In terms of assembly, part of the 30S ribosomal subunit. Contacts proteins S9 and S11.

In terms of biological role, one of the primary rRNA binding proteins, it binds directly to 16S rRNA where it nucleates assembly of the head domain of the 30S subunit. Is located at the subunit interface close to the decoding center, probably blocks exit of the E-site tRNA. This Corynebacterium jeikeium (strain K411) protein is Small ribosomal subunit protein uS7.